The following is a 232-amino-acid chain: MNHFTFTDRTVVAELVAKMLWEIKAVHFNSESPYTFASGMKSPVYIDMRKLISFPRIRSAAMDFAAAAVMREAGFEKFDCVAGGETAGIPFAAFLAERLGLPMIYCRKKPKGHGRNAQIEGHMPDGARVLVIEDLTTAGGSMFTFIDAIRAAGGIVDHGIALFYYGIFEEAEARFANGNVKLHYLTTWRDVLAVARAEKLFDEKTLSGVEAFLDNPLPWSAKHGGVSELPQS.

Residues R107, K108, K111, H113, and 133-141 contribute to the 5-phospho-alpha-D-ribose 1-diphosphate site; that span reads EDLTTAGGS. T137 lines the orotate pocket.

It belongs to the purine/pyrimidine phosphoribosyltransferase family. PyrE subfamily. Homodimer. It depends on Mg(2+) as a cofactor.

The enzyme catalyses orotidine 5'-phosphate + diphosphate = orotate + 5-phospho-alpha-D-ribose 1-diphosphate. The protein operates within pyrimidine metabolism; UMP biosynthesis via de novo pathway; UMP from orotate: step 1/2. Catalyzes the transfer of a ribosyl phosphate group from 5-phosphoribose 1-diphosphate to orotate, leading to the formation of orotidine monophosphate (OMP). The protein is Orotate phosphoribosyltransferase of Agrobacterium fabrum (strain C58 / ATCC 33970) (Agrobacterium tumefaciens (strain C58)).